Reading from the N-terminus, the 694-residue chain is Elongation factor G (694 aa).

The region spanning 8–283 (ERYRNIGIMA…AVIDYLPAPV (276 aa)) is the tr-type G domain. GTP is bound by residues 17 to 24 (AHIDAGKT), 81 to 85 (DTPGH), and 135 to 138 (NKMD).

Belongs to the TRAFAC class translation factor GTPase superfamily. Classic translation factor GTPase family. EF-G/EF-2 subfamily.

The protein resides in the cytoplasm. In terms of biological role, catalyzes the GTP-dependent ribosomal translocation step during translation elongation. During this step, the ribosome changes from the pre-translocational (PRE) to the post-translocational (POST) state as the newly formed A-site-bound peptidyl-tRNA and P-site-bound deacylated tRNA move to the P and E sites, respectively. Catalyzes the coordinated movement of the two tRNA molecules, the mRNA and conformational changes in the ribosome. This is Elongation factor G from Paramagnetospirillum magneticum (strain ATCC 700264 / AMB-1) (Magnetospirillum magneticum).